Reading from the N-terminus, the 536-residue chain is Organic anion transporter 3 (536 aa).

At 1-11 the chain is on the cytoplasmic side; it reads MTFSEILDRVG. Ser-4 bears the Phosphoserine mark. The helical transmembrane segment at 12 to 32 threads the bilayer; the sequence is SMGPFQYLHVTLLALPVLGIA. Over 33-123 the chain is Extracellular; that stretch reads NHNLLQIFTA…LVCSSNKLKE (91 aa). 2 N-linked (GlcNAc...) asparagine glycosylation sites follow: Asn-81 and Asn-86. The helical transmembrane segment at 124 to 144 threads the bilayer; the sequence is MAQSIFMAGILVGGPVIGELS. The Cytoplasmic segment spans residues 145–158; it reads DRFGRKPILTWSYL. A helical transmembrane segment spans residues 159-179; it reads MLAASGSGAAFSPSLPVYMIF. Arg-180 is a topological domain (extracellular). A helical membrane pass occupies residues 181 to 201; sequence FLCGCSISGISLSTVILNVEW. Residues 202-212 are Cytoplasmic-facing; the sequence is VPTSMRAISST. A helical membrane pass occupies residues 213 to 233; it reads SIGYCYTIGQFILSGLAYAIP. Residues 234–236 are Extracellular-facing; it reads QWR. The helical transmembrane segment at 237-257 threads the bilayer; that stretch reads WLQLTSSAPFFIFSLLSWWVP. The Cytoplasmic segment spans residues 258-327; the sequence is ESIRWLVLSG…FRVSILRRVT (70 aa). The chain crosses the membrane as a helical span at residues 328 to 348; sequence FCLSLAWFSTGFAYYSLAMGV. Over 349-354 the chain is Extracellular; it reads EEFGVN. A helical transmembrane segment spans residues 355–375; it reads IYILQIIFGGVDIPAKFITIL. Residues 376–383 are Cytoplasmic-facing; sequence SLSYLGRR. Residues 384–404 traverse the membrane as a helical segment; it reads ITQSFLLLLAGGAILALIFVP. Residues 405 to 411 lie on the Extracellular side of the membrane; that stretch reads SEMQLLR. Residues 412 to 432 traverse the membrane as a helical segment; that stretch reads TALAVFGKGCLSGSFSCLFLY. Topologically, residues 433–471 are cytoplasmic; it reads TSELYPTVLRQTGMGISNVWARVGSMIAPLVKITGELQP. Residues 472–492 traverse the membrane as a helical segment; that stretch reads FIPNVIFGTTALLGGSAAFFL. Over 493–536 the chain is Extracellular; that stretch reads LETLNRPLPETIEDIQNWHKQVQKTKQESEAEKASQIIPLKTGG. The interval 515–536 is disordered; the sequence is QKTKQESEAEKASQIIPLKTGG.

It belongs to the major facilitator (TC 2.A.1) superfamily. Organic cation transporter (TC 2.A.1.19) family. As to expression, expressed in the liver, brain, kidney, choroid plexus and weakly in the eye. Moderately expressed (at protein level) in the brain capillary endothelial cells (BCEC).

It is found in the basolateral cell membrane. The catalysed reaction is estrone 3-sulfate(out) + glutarate(in) = estrone 3-sulfate(in) + glutarate(out). It carries out the reaction estrone 3-sulfate(in) + 2-oxoglutarate(out) = estrone 3-sulfate(out) + 2-oxoglutarate(in). The enzyme catalyses glutarate(in) + 2-oxoglutarate(out) = glutarate(out) + 2-oxoglutarate(in). It catalyses the reaction urate(in) + 2-oxoglutarate(out) = urate(out) + 2-oxoglutarate(in). The catalysed reaction is taurocholate(out) + glutarate(in) = taurocholate(in) + glutarate(out). It carries out the reaction dehydroepiandrosterone 3-sulfate(out) + glutarate(in) = dehydroepiandrosterone 3-sulfate(in) + glutarate(out). The enzyme catalyses prostaglandin F2alpha(out) + glutarate(in) = prostaglandin F2alpha(in) + glutarate(out). It catalyses the reaction prostaglandin F2alpha(out) + 2-oxoglutarate(in) = prostaglandin F2alpha(in) + 2-oxoglutarate(out). The catalysed reaction is (R)-carnitine(out) + 2-oxoglutarate(in) = (R)-carnitine(in) + 2-oxoglutarate(out). It carries out the reaction glutarate(in) + (R)-carnitine(out) = glutarate(out) + (R)-carnitine(in). The enzyme catalyses prostaglandin E2(out) + 2-oxoglutarate(in) = prostaglandin E2(in) + 2-oxoglutarate(out). It catalyses the reaction prostaglandin E2(out) + glutarate(in) = prostaglandin E2(in) + glutarate(out). The catalysed reaction is urate(in) + glutarate(out) = urate(out) + glutarate(in). It carries out the reaction taurocholate(out) + 2-oxoglutarate(in) = taurocholate(in) + 2-oxoglutarate(out). The enzyme catalyses dehydroepiandrosterone 3-sulfate(out) + 2-oxoglutarate(in) = dehydroepiandrosterone 3-sulfate(in) + 2-oxoglutarate(out). It catalyses the reaction kynurenate(out) + a dicarboxylate(in) = kynurenate(in) + a dicarboxylate(out). The catalysed reaction is (indol-3-yl)acetate(out) + a dicarboxylate(in) = (indol-3-yl)acetate(in) + a dicarboxylate(out). It carries out the reaction indoxyl sulfate(out) + a dicarboxylate(in) = indoxyl sulfate(in) + a dicarboxylate(out). The enzyme catalyses N-benzoylglycine(out) + a dicarboxylate(in) = N-benzoylglycine(in) + a dicarboxylate(out). It catalyses the reaction 3-carboxy-4-methyl-5-propyl-2-furanpropanoate(out) + a dicarboxylate(in) = 3-carboxy-4-methyl-5-propyl-2-furanpropanoate(in) + a dicarboxylate(out). The catalysed reaction is (6R)-L-erythro-5,6,7,8-tetrahydrobiopterin(out) + a dicarboxylate(in) = (6R)-L-erythro-5,6,7,8-tetrahydrobiopterin(in) + a dicarboxylate(out). It carries out the reaction L-erythro-7,8-dihydrobiopterin(out) + a dicarboxylate(in) = L-erythro-7,8-dihydrobiopterin(in) + a dicarboxylate(out). The enzyme catalyses L-sepiapterin(out) + a dicarboxylate(in) = L-sepiapterin(in) + a dicarboxylate(out). Functions as an organic anion/dicarboxylate exchanger that couples organic anion uptake indirectly to the sodium gradient. Transports organic anions such as estrone 3-sulfate (E1S) and urate in exchange for dicarboxylates such as glutarate or ketoglutarate (2-oxoglutarate). Plays an important role in the excretion of endogenous and exogenous organic anions, especially from the kidney and the brain. E1S transport is pH- and chloride-dependent and may also involve E1S/cGMP exchange. Responsible for the transport of prostaglandin E2 (PGE2) and prostaglandin F2(alpha) (PGF2(alpha)) in the basolateral side of the renal tubule. Involved in the transport of neuroactive tryptophan metabolites kynurenate and xanthurenate. Functions as a biopterin transporters involved in the uptake and the secretion of coenzymes tetrahydrobiopterin (BH4), dihydrobiopterin (BH2) and sepiapterin to urine, thereby determining baseline levels of blood biopterins. May be involved in the basolateral transport of steviol, a metabolite of the popular sugar substitute stevioside. May participate in the detoxification/ renal excretion of drugs and xenobiotics, such as the histamine H(2)-receptor antagonists fexofenadine and cimetidine, the antibiotic benzylpenicillin (PCG), the anionic herbicide 2,4-dichloro-phenoxyacetate (2,4-D), the diagnostic agent p-aminohippurate (PAH), the antiviral acyclovir (ACV), and the mycotoxin ochratoxin (OTA), by transporting these exogenous organic anions across the cell membrane in exchange for dicarboxylates such as 2-oxoglutarate. Contributes to the renal uptake of potent uremic toxins (indoxyl sulfate (IS), indole acetate (IA), hippurate/N-benzoylglycine (HA) and 3-carboxy-4-methyl-5-propyl-2-furanpropionate (CMPF)), pravastatin, PCG, E1S and dehydroepiandrosterone sulfate (DHEAS), and is partly involved in the renal uptake of temocaprilat (an angiotensin-converting enzyme (ACE) inhibitor). May contribute to the release of cortisol in the adrenals. Involved in one of the detoxification systems on the choroid plexus (CP), removes substrates such as E1S or taurocholate (TC), PCG, 2,4-D and PAH, from the cerebrospinal fluid (CSF) to the blood for eventual excretion in urine and bile. Regulates the CSF concentration of histamine H(2)-receptor antagonists cimetidine and ranitidine at the CP. Also contributes to the uptake of several other organic compounds such as the prostanoids prostaglandin E(2) and prostaglandin F(2-alpha), L-carnitine, and the therapeutic drugs allopurinol, 6-mercaptopurine (6-MP) and 5-fluorouracil (5-FU). Mediates the uptake from brain of organic anions, such as E1S, PAH, and OTA. Mediates the transport of PAH, PCG, and the statins pravastatin and pitavastatin, from the cerebrum into the blood circulation across the blood-brain barrier (BBB). In summary, plays a role in the efflux of drugs and xenobiotics, helping reduce their undesired toxicological effects on the body. The polypeptide is Organic anion transporter 3 (Slc22a8) (Rattus norvegicus (Rat)).